The primary structure comprises 191 residues: Cyclin-dependent kinase inhibitor 1 (191 aa).

The interval 62–81 (LIHLEEEDKDGDTETSTYRR) is disordered. Residues 162-191 (QLKEKFKKKYNFDFEKEKPLEGRYEWVKLE) form a required for inhibitory function and interaction with CDK kinase complexes region.

This sequence belongs to the CDI family. ICK/KRP subfamily. As to quaternary structure, specifically interacts with CDKA-1, but not with CDKB1-1. Interacts with CYCD2-1 and CYCD3-1. In terms of processing, ubiquitinated independently by RKP and SCF (SKP1-CUL1-FBL5/SKP2B) protein ligase complex, leading to proteasomal degradation. In terms of tissue distribution, expressed at low levels in roots, stems, leaves and flowers.

The protein resides in the nucleus. Its subcellular location is the nucleoplasm. In terms of biological role, binds and inhibits CYCD2-1/CDKA-1 kinase complex activity. Regulates cell division which is crucial for plant growth, development and morphogenesis. Functions in turning cells from a mitotic to an endoreplicating cell cycle mode. Acts cell- and non-cell-autonomously to regulate endoreduplication by allowing S phase progression, but blocking entry into mitosis. Keeps on the one hand the plant cell cycle locally controlled, and on the other hand provides a possibility of linking cell cycle control in single cells with the supracellular organization of a tissue or an organ. May target specifically CDKA-1. The protein is Cyclin-dependent kinase inhibitor 1 (KRP1) of Arabidopsis thaliana (Mouse-ear cress).